Reading from the N-terminus, the 183-residue chain is ATP-dependent protease subunit HslV (183 aa).

The active site involves T13. Residues G168, C171, and T174 each contribute to the Na(+) site.

The protein belongs to the peptidase T1B family. HslV subfamily. A double ring-shaped homohexamer of HslV is capped on each side by a ring-shaped HslU homohexamer. The assembly of the HslU/HslV complex is dependent on binding of ATP.

It localises to the cytoplasm. It catalyses the reaction ATP-dependent cleavage of peptide bonds with broad specificity.. With respect to regulation, allosterically activated by HslU binding. Its function is as follows. Protease subunit of a proteasome-like degradation complex believed to be a general protein degrading machinery. The chain is ATP-dependent protease subunit HslV from Stenotrophomonas maltophilia (strain R551-3).